We begin with the raw amino-acid sequence, 429 residues long: Probable M18 family aminopeptidase 2 (429 aa).

Residues His-82, His-156, and His-401 each contribute to the Zn(2+) site.

It belongs to the peptidase M18 family. Zn(2+) is required as a cofactor.

In Pseudomonas savastanoi pv. phaseolicola (strain 1448A / Race 6) (Pseudomonas syringae pv. phaseolicola (strain 1448A / Race 6)), this protein is Probable M18 family aminopeptidase 2.